A 416-amino-acid chain; its full sequence is Phosphoglycerate kinase (416 aa).

14 residues coordinate (2R)-3-phosphoglycerate: Val23, Asp24, Phe25, Asn26, Gln38, Arg39, Ser62, His63, Gly65, Arg66, Leu121, Arg122, His168, and Arg169. Residue Gly212 coordinates ADP. Gly212 provides a ligand contact to CDP. Positions 213 and 214 each coordinate AMP. Ala213 contributes to the ATP binding site. Ala213 serves as a coordination point for Mg(2+). Asp217 serves as a coordination point for CDP. Asp217 is a Mg(2+) binding site. AMP is bound at residue Lys218. Lys218 serves as a coordination point for ATP. Gly236 contacts ADP. A CDP-binding site is contributed by Gly236. AMP is bound by residues Gly237 and Gly311. Residues Gly237 and Gly311 each contribute to the ATP site. CDP-binding residues include Gly336 and Phe341. Phe341 contacts ADP. Residue Glu342 participates in AMP binding. 3 residues coordinate ATP: Glu342, Asp373, and Thr374. A Mg(2+)-binding site is contributed by Asp373.

It belongs to the phosphoglycerate kinase family. Monomer. Requires Mg(2+) as cofactor.

Its subcellular location is the cytoplasm. It localises to the mitochondrion. The catalysed reaction is (2R)-3-phosphoglycerate + ATP = (2R)-3-phospho-glyceroyl phosphate + ADP. The protein operates within carbohydrate degradation; glycolysis; pyruvate from D-glyceraldehyde 3-phosphate: step 2/5. Its function is as follows. Catalyzes one of the two ATP producing reactions in the glycolytic pathway via the reversible conversion of 1,3-diphosphoglycerate to 3-phosphoglycerate. Both L- and D- forms of purine and pyrimidine nucleotides can be used as substrates, but the activity is much lower on pyrimidines. Negatively regulates the biosynthesis of acetyl-CoA from pyruvate in the mitochondrion. The sequence is that of Phosphoglycerate kinase (PGK1) from Debaryomyces hansenii (strain ATCC 36239 / CBS 767 / BCRC 21394 / JCM 1990 / NBRC 0083 / IGC 2968) (Yeast).